The sequence spans 644 residues: Protein FAM149B1 (644 aa).

Disordered stretches follow at residues 392–490 (NQSD…NTLL), 551–575 (TFRSDTPYHRSFTGIDNIGQGRPGR), and 609–644 (GHFPIGHEEEPDAKASGQARSHNRGGSTARSSRPGL). Basic and acidic residues predominate over residues 395-404 (DCRDSEDKVS). The span at 449–459 (PITSSVTQPIT) shows a compositional bias: polar residues. Residues 626–644 (QARSHNRGGSTARSSRPGL) show a composition bias toward polar residues.

Belongs to the FAM149 family.

The chain is Protein FAM149B1 (fam149b1) from Danio rerio (Zebrafish).